The chain runs to 339 residues: Methylthioribose-1-phosphate isomerase (339 aa).

Residues 50–52 (RGA), Arg84, and Gln186 contribute to the substrate site. Catalysis depends on Asp227, which acts as the Proton donor. Position 237-238 (237-238 (NK)) interacts with substrate.

Belongs to the eIF-2B alpha/beta/delta subunits family. MtnA subfamily.

It carries out the reaction 5-(methylsulfanyl)-alpha-D-ribose 1-phosphate = 5-(methylsulfanyl)-D-ribulose 1-phosphate. It functions in the pathway amino-acid biosynthesis; L-methionine biosynthesis via salvage pathway; L-methionine from S-methyl-5-thio-alpha-D-ribose 1-phosphate: step 1/6. Its function is as follows. Catalyzes the interconversion of methylthioribose-1-phosphate (MTR-1-P) into methylthioribulose-1-phosphate (MTRu-1-P). This Sulfurihydrogenibium sp. (strain YO3AOP1) protein is Methylthioribose-1-phosphate isomerase.